Here is a 730-residue protein sequence, read N- to C-terminus: Translation factor GUF1 homolog, mitochondrial (730 aa).

The region spanning 106 to 289 (ELIRNFCIIA…AVVVSIPPPK (184 aa)) is the tr-type G domain. GTP contacts are provided by residues 115–122 (AHVDHGKS), 182–186 (DTPGH), and 236–239 (NKID).

The protein belongs to the TRAFAC class translation factor GTPase superfamily. Classic translation factor GTPase family. LepA subfamily.

Its subcellular location is the mitochondrion inner membrane. The catalysed reaction is GTP + H2O = GDP + phosphate + H(+). In terms of biological role, promotes mitochondrial protein synthesis. May act as a fidelity factor of the translation reaction, by catalyzing a one-codon backward translocation of tRNAs on improperly translocated ribosomes. Binds to mitochondrial ribosomes in a GTP-dependent manner. The polypeptide is Translation factor GUF1 homolog, mitochondrial (Theileria annulata).